A 103-amino-acid polypeptide reads, in one-letter code: Small ribosomal subunit protein uS10 (103 aa).

It belongs to the universal ribosomal protein uS10 family. As to quaternary structure, part of the 30S ribosomal subunit.

Involved in the binding of tRNA to the ribosomes. This chain is Small ribosomal subunit protein uS10, found in Neisseria gonorrhoeae (strain ATCC 700825 / FA 1090).